Consider the following 73-residue polypeptide: Small, acid-soluble spore protein C5 (73 aa).

Belongs to the alpha/beta-type SASP family.

SASP are bound to spore DNA. They are double-stranded DNA-binding proteins that cause DNA to change to an a-like conformation. They protect the DNA backbone from chemical and enzymatic cleavage and are thus involved in dormant spore's high resistance to UV light. The sequence is that of Small, acid-soluble spore protein C5 (SASP-C5) from Priestia megaterium (Bacillus megaterium).